The primary structure comprises 89 residues: Small ribosomal subunit protein uS15 (89 aa).

This sequence belongs to the universal ribosomal protein uS15 family. In terms of assembly, part of the 30S ribosomal subunit. Forms a bridge to the 50S subunit in the 70S ribosome, contacting the 23S rRNA.

In terms of biological role, one of the primary rRNA binding proteins, it binds directly to 16S rRNA where it helps nucleate assembly of the platform of the 30S subunit by binding and bridging several RNA helices of the 16S rRNA. Functionally, forms an intersubunit bridge (bridge B4) with the 23S rRNA of the 50S subunit in the ribosome. This Prochlorococcus marinus (strain MIT 9515) protein is Small ribosomal subunit protein uS15.